Reading from the N-terminus, the 76-residue chain is MPKRILQGTVTSDANAQTVTVLVERRFTHPVLKKTIRKSKKYRAHDEKNAFKVGDTVRIIECAPKSKTKRWEVLEA.

This sequence belongs to the universal ribosomal protein uS17 family. In terms of assembly, part of the 30S ribosomal subunit.

Its function is as follows. One of the primary rRNA binding proteins, it binds specifically to the 5'-end of 16S ribosomal RNA. This chain is Small ribosomal subunit protein uS17, found in Ruegeria pomeroyi (strain ATCC 700808 / DSM 15171 / DSS-3) (Silicibacter pomeroyi).